The chain runs to 120 residues: Large ribosomal subunit protein uL18 (120 aa).

The protein belongs to the universal ribosomal protein uL18 family. As to quaternary structure, part of the 50S ribosomal subunit; part of the 5S rRNA/L5/L18/L25 subcomplex. Contacts the 5S and 23S rRNAs.

In terms of biological role, this is one of the proteins that bind and probably mediate the attachment of the 5S RNA into the large ribosomal subunit, where it forms part of the central protuberance. In Hyphomonas neptunium (strain ATCC 15444), this protein is Large ribosomal subunit protein uL18.